Reading from the N-terminus, the 345-residue chain is 3-dehydroquinate synthase (345 aa).

This sequence belongs to the archaeal-type DHQ synthase family.

It catalyses the reaction 2-amino-2,3,7-trideoxy-D-lyxo-hept-6-ulosonate + NAD(+) + H2O = 3-dehydroquinate + NH4(+) + NADH + H(+). In terms of biological role, catalyzes the oxidative deamination and cyclization of 2-amino-3,7-dideoxy-D-threo-hept-6-ulosonic acid (ADH) to yield 3-dehydroquinate (DHQ), which is fed into the canonical shikimic pathway of aromatic amino acid biosynthesis. The chain is 3-dehydroquinate synthase from Methanocorpusculum labreanum (strain ATCC 43576 / DSM 4855 / Z).